The following is a 276-amino-acid chain: Non-homologous end joining protein Ku (276 aa).

The region spanning 11–177 is the Ku domain; that stretch reads ISFGLVHIPI…PEEIRSMEPL (167 aa). Residues 256–276 form a disordered region; sequence QVKTQQKKEAAPKKERRRKTS.

The protein belongs to the prokaryotic Ku family. Homodimer. Interacts with LigD.

Functionally, with LigD forms a non-homologous end joining (NHEJ) DNA repair enzyme, which repairs dsDNA breaks with reduced fidelity. Binds linear dsDNA with 5'- and 3'- overhangs but not closed circular dsDNA nor ssDNA. Recruits and stimulates the ligase activity of LigD. The polypeptide is Non-homologous end joining protein Ku (Heliobacterium modesticaldum (strain ATCC 51547 / Ice1)).